The primary structure comprises 361 residues: Chorismate synthase (361 aa).

Residues R48 and R54 each contribute to the NADP(+) site. Residues 125–127 (RSS), 238–239 (NA), G278, 293–297 (KPTSS), and R319 contribute to the FMN site.

This sequence belongs to the chorismate synthase family. As to quaternary structure, homotetramer. Requires FMNH2 as cofactor.

The enzyme catalyses 5-O-(1-carboxyvinyl)-3-phosphoshikimate = chorismate + phosphate. The protein operates within metabolic intermediate biosynthesis; chorismate biosynthesis; chorismate from D-erythrose 4-phosphate and phosphoenolpyruvate: step 7/7. Catalyzes the anti-1,4-elimination of the C-3 phosphate and the C-6 proR hydrogen from 5-enolpyruvylshikimate-3-phosphate (EPSP) to yield chorismate, which is the branch point compound that serves as the starting substrate for the three terminal pathways of aromatic amino acid biosynthesis. This reaction introduces a second double bond into the aromatic ring system. This Escherichia coli O7:K1 (strain IAI39 / ExPEC) protein is Chorismate synthase.